Here is a 115-residue protein sequence, read N- to C-terminus: DNA-binding protein NP_4416A (115 aa).

Positions 1-11 are enriched in acidic residues; that stretch reads MSGEPTDEDLE. Residues 1–46 form a disordered region; sequence MSGEPTDEDLEELRKKKMEQLKEQGGEGQSEAAEAQRQQAEAQKKA. Residues 12 to 25 are compositionally biased toward basic and acidic residues; that stretch reads ELRKKKMEQLKEQG. Positions 29 to 41 are enriched in low complexity; that stretch reads QSEAAEAQRQQAE.

Belongs to the PDCD5 family.

This chain is DNA-binding protein NP_4416A, found in Natronomonas pharaonis (strain ATCC 35678 / DSM 2160 / CIP 103997 / JCM 8858 / NBRC 14720 / NCIMB 2260 / Gabara) (Halobacterium pharaonis).